Reading from the N-terminus, the 393-residue chain is Dual specificity mitogen-activated protein kinase kinase 1 (393 aa).

The tract at residues 1-27 (MPKKKPTPIQLNPAPDGSAVNGTSSAE) is disordered. The region spanning 68–361 (FEKISELGAG…LKQLMVHAFI (294 aa)) is the Protein kinase domain. Residues 74–82 (LGAGNGGVV) and Lys97 contribute to the ATP site. The active-site Proton acceptor is Asp190. Phosphoserine; by RAF is present on residues Ser218 and Ser222. Residues 270–307 (ELELLFGCQVEGDAAETPPRPRTPGRPLSSYGMDSRPP) are RAF1-binding. Thr286 is modified (phosphothreonine). Thr292 carries the post-translational modification Phosphothreonine; by MAPK1. Phosphoserine; by PAK is present on Ser298.

This sequence belongs to the protein kinase superfamily. STE Ser/Thr protein kinase family. MAP kinase kinase subfamily. Found in a complex with at least BRAF, HRAS, MAP2K1, MAPK3/ERK1 and RGS14. Forms a heterodimer with MAP2K2/MEK2. Forms heterodimers with KSR2 which further dimerize to form tetramers. Interacts with KSR1 or KSR2 and BRAF; the interaction with KSR1 or KSR2 mediates KSR1-BRAF or KSR2-BRAF dimerization. Interacts with ARBB2, LAMTOR3, MAPK1/ERK2 and RAF1. Interacts with MAPK1/ERK2. Interacts with MORG1. Interacts with PPARG. Interacts with VRK2. Interacts with SGK1. Interacts with BIRC6/bruce. Interacts with KAT7; the interaction promotes KAT7 phosphorylation. Interacts with RAF1 and NEK10; the interaction is required for ERK1/2-signaling pathway activation in response to UV irradiation. Interacts with TRAF3IP3. Interacts with MOS. In terms of processing, phosphorylation at Ser-218 and Ser-222 by MAP kinase kinase kinases (BRAF or MEKK1) positively regulates kinase activity. Also phosphorylated at Thr-292 by MAPK1/ERK2 and at Ser-298 by PAK. MAPK1/ERK2 phosphorylation of Thr-292 occurs in response to cellular adhesion and leads to inhibition of Ser-298 phosphorylation by PAK. Autophosphorylated at Ser-218 and Ser-222, autophosphosphorylation is promoted by NEK10 following UV irradiation.

The protein localises to the cytoplasm. It is found in the cytoskeleton. Its subcellular location is the microtubule organizing center. The protein resides in the centrosome. It localises to the spindle pole body. The protein localises to the nucleus. It is found in the membrane. The catalysed reaction is L-seryl-[protein] + ATP = O-phospho-L-seryl-[protein] + ADP + H(+). It carries out the reaction L-threonyl-[protein] + ATP = O-phospho-L-threonyl-[protein] + ADP + H(+). The enzyme catalyses L-tyrosyl-[protein] + ATP = O-phospho-L-tyrosyl-[protein] + ADP + H(+). Its activity is regulated as follows. Ras proteins such as HRAS mediate the activation of RAF proteins such as RAF1 or BRAF which in turn activate extracellular signal-regulated kinases (ERK) through MAPK (mitogen-activated protein kinases) and ERK kinases MAP2K1/MEK1 and MAP2K2/MEK2. Activation occurs through phosphorylation of Ser-218 and Ser-222. MAP2K1/MEK1 binds KSR1 or KSR2 releasing the inhibitory intramolecular interaction between KSR1 or KSR2 protein kinase and N-terminal domains. This allows KSR1 or KSR2 dimerization with BRAF leading to BRAF activation and phosphorylation of MAP2K1. MAP2K1/MEK1 is also the target of negative feed-back regulation by its substrate kinases, such as MAPK1/ERK2. These phosphorylate MAP2K1/MEK1 on Thr-292, thereby facilitating dephosphorylation of the activating residues Ser-218 and Ser-222. Inhibited by serine/threonine phosphatase 2A. Dual specificity protein kinase which acts as an essential component of the MAP kinase signal transduction pathway. Binding of extracellular ligands such as growth factors, cytokines and hormones to their cell-surface receptors activates RAS and this initiates RAF1 activation. RAF1 then further activates the dual-specificity protein kinases MAP2K1/MEK1 and MAP2K2/MEK2. Both MAP2K1/MEK1 and MAP2K2/MEK2 function specifically in the MAPK/ERK cascade, and catalyze the concomitant phosphorylation of a threonine and a tyrosine residue in a Thr-Glu-Tyr sequence located in the extracellular signal-regulated kinases MAPK3/ERK1 and MAPK1/ERK2, leading to their activation and further transduction of the signal within the MAPK/ERK cascade. Activates BRAF in a KSR1 or KSR2-dependent manner; by binding to KSR1 or KSR2 releases the inhibitory intramolecular interaction between KSR1 or KSR2 protein kinase and N-terminal domains which promotes KSR1 or KSR2-BRAF dimerization and BRAF activation. Depending on the cellular context, this pathway mediates diverse biological functions such as cell growth, adhesion, survival and differentiation, predominantly through the regulation of transcription, metabolism and cytoskeletal rearrangements. One target of the MAPK/ERK cascade is peroxisome proliferator-activated receptor gamma (PPARG), a nuclear receptor that promotes differentiation and apoptosis. MAP2K1/MEK1 has been shown to export PPARG from the nucleus. The MAPK/ERK cascade is also involved in the regulation of endosomal dynamics, including lysosome processing and endosome cycling through the perinuclear recycling compartment (PNRC), as well as in the fragmentation of the Golgi apparatus during mitosis. This chain is Dual specificity mitogen-activated protein kinase kinase 1, found in Rattus norvegicus (Rat).